The sequence spans 573 residues: Probable D-xylulose kinase A (573 aa).

His100, Arg171, Asp287, and Asn288 together coordinate substrate. Residues Trp368, 473 to 474 (GG), and Asn477 each bind ATP.

Belongs to the FGGY kinase family.

It is found in the cytoplasm. It catalyses the reaction D-xylulose + ATP = D-xylulose 5-phosphate + ADP + H(+). Functionally, highly specific D-xylulose kinase which participates in the catabolism of xylose. Xylose is a major component of hemicelluloses such as xylan. Most fungi utilize D-xylose via three enzymatic reactions, xylose reductase (XR), xylitol dehydrogenase (XDH), and xylulokinase, to form xylulose 5-phosphate, which enters pentose phosphate pathway. This chain is Probable D-xylulose kinase A (xkiA), found in Aspergillus terreus (strain NIH 2624 / FGSC A1156).